The sequence spans 121 residues: Putative membrane protein insertion efficiency factor (121 aa).

This sequence belongs to the UPF0161 family.

It is found in the cell inner membrane. Functionally, could be involved in insertion of integral membrane proteins into the membrane. The chain is Putative membrane protein insertion efficiency factor from Rhodopseudomonas palustris (strain HaA2).